We begin with the raw amino-acid sequence, 331 residues long: Anthranilate phosphoribosyltransferase (331 aa).

5-phospho-alpha-D-ribose 1-diphosphate contacts are provided by residues Gly-79, 82-83 (GD), Thr-87, 89-92 (NIST), 107-115 (KHGNYGATS), and Ala-119. Gly-79 lines the anthranilate pocket. Ser-91 is a binding site for Mg(2+). Asn-110 is an anthranilate binding site. Arg-165 provides a ligand contact to anthranilate. Positions 223 and 224 each coordinate Mg(2+).

Belongs to the anthranilate phosphoribosyltransferase family. In terms of assembly, homodimer. Mg(2+) serves as cofactor.

The enzyme catalyses N-(5-phospho-beta-D-ribosyl)anthranilate + diphosphate = 5-phospho-alpha-D-ribose 1-diphosphate + anthranilate. It functions in the pathway amino-acid biosynthesis; L-tryptophan biosynthesis; L-tryptophan from chorismate: step 2/5. Catalyzes the transfer of the phosphoribosyl group of 5-phosphorylribose-1-pyrophosphate (PRPP) to anthranilate to yield N-(5'-phosphoribosyl)-anthranilate (PRA). The protein is Anthranilate phosphoribosyltransferase of Bacteroides fragilis (strain YCH46).